A 500-amino-acid polypeptide reads, in one-letter code: Glutamate--tRNA ligase (500 aa).

A 'HIGH' region motif is present at residues 12–22; that stretch reads PSPTGHLHIGN. The 'KMSKS' region motif lies at 259–263; it reads KLSKR. Lysine 262 provides a ligand contact to ATP.

This sequence belongs to the class-I aminoacyl-tRNA synthetase family. Glutamate--tRNA ligase type 1 subfamily. As to quaternary structure, monomer.

It localises to the cytoplasm. It catalyses the reaction tRNA(Glu) + L-glutamate + ATP = L-glutamyl-tRNA(Glu) + AMP + diphosphate. Catalyzes the attachment of glutamate to tRNA(Glu) in a two-step reaction: glutamate is first activated by ATP to form Glu-AMP and then transferred to the acceptor end of tRNA(Glu). This chain is Glutamate--tRNA ligase, found in Lactobacillus delbrueckii subsp. bulgaricus (strain ATCC BAA-365 / Lb-18).